The primary structure comprises 204 residues: GATA transcription factor 14 (204 aa).

Residues 57–66 (REFDTNDSKP) are compositionally biased toward basic and acidic residues. The segment at 57 to 102 (REFDTNDSKPSRNFSNLPTATRGRLHAPKRSGNKRGRQKRLSFKSP) is disordered. Residues 79–98 (GRLHAPKRSGNKRGRQKRLS) show a composition bias toward basic residues. Residues 111 to 165 (GITDKSCSHCGTRKTPLWREGPRGAGTLCNACGMRYRTGRLLPEYRPASSPDFKP) form a GATA-type zinc finger. Residues 180–204 (RERKSSPPNSFGFSESYHSTRKLGF) are disordered. Residues 185–196 (SPPNSFGFSESY) show a composition bias toward polar residues.

It belongs to the type IV zinc-finger family. Class A subfamily.

Its subcellular location is the nucleus. Functionally, transcriptional activator that specifically binds 5'-GATA-3' or 5'-GAT-3' motifs within gene promoters. May be involved in the regulation of some light-responsive genes. The chain is GATA transcription factor 14 (GATA14) from Arabidopsis thaliana (Mouse-ear cress).